The sequence spans 152 residues: MDEQEIQRLVEEVSLQYFGMPFLHKAMFNRRLRTTGGRYLLNTHNIELNYRYYEMYGKEELVGIVKHELCHYHLHITGRGYKHRDKDFRELLKAVDAPRFCKRMVNAEKEKRVYVYECMECLLQYVRRRQINTKRYVCGKCKGKLNLIKKTS.

Residues Gln7–Ile148 enclose the SprT-like domain. His67 serves as a coordination point for Zn(2+). Glu68 is an active-site residue. A Zn(2+)-binding site is contributed by His71.

This sequence belongs to the SprT family. Zn(2+) is required as a cofactor.

The protein localises to the cytoplasm. This Bacillus cereus (strain 03BB102) protein is Protein SprT-like.